A 237-amino-acid chain; its full sequence is MPTEDAYPELQEEEIDVEAELEKLILEDREAEASTSSGEASAEASQDLSETLKQLQQELEITRQQLKEKEESYIRLYADFENYRRRTQREKEEFSQKERQKFVLEILPVVDSFERAQQQLKLETDREREVHNSYQSVYRLLVECLKKMGVSRMKSVGQPFDPNLHEAIARQPSSEYPEDVVAVEYQPGYKLGDLVIRHAMVAVSSGSPTSEPSPSDPATPKPEPESTPASPQNPQHS.

2 disordered regions span residues 27–51 (EDRE…LSET) and 202–237 (AVSS…PQHS). Low complexity-rich tracts occupy residues 33–45 (ASTS…AEAS) and 204–213 (SSGSPTSEPS). The span at 227–237 (TPASPQNPQHS) shows a compositional bias: polar residues.

Belongs to the GrpE family. Homodimer.

It is found in the cytoplasm. In terms of biological role, participates actively in the response to hyperosmotic and heat shock by preventing the aggregation of stress-denatured proteins, in association with DnaK and GrpE. It is the nucleotide exchange factor for DnaK and may function as a thermosensor. Unfolded proteins bind initially to DnaJ; upon interaction with the DnaJ-bound protein, DnaK hydrolyzes its bound ATP, resulting in the formation of a stable complex. GrpE releases ADP from DnaK; ATP binding to DnaK triggers the release of the substrate protein, thus completing the reaction cycle. Several rounds of ATP-dependent interactions between DnaJ, DnaK and GrpE are required for fully efficient folding. The polypeptide is Protein GrpE (Synechococcus sp. (strain JA-3-3Ab) (Cyanobacteria bacterium Yellowstone A-Prime)).